A 446-amino-acid polypeptide reads, in one-letter code: Bifunctional protein GlmU (446 aa).

Residues M1–R229 form a pyrophosphorylase region. UDP-N-acetyl-alpha-D-glucosamine contacts are provided by residues L11 to G14, K25, Q78, G83 to T84, Y106 to D108, G141, E155, N170, and N227. D108 is a binding site for Mg(2+). A Mg(2+)-binding site is contributed by N227. Residues A230 to D250 form a linker region. The tract at residues G251–N446 is N-acetyltransferase. The UDP-N-acetyl-alpha-D-glucosamine site is built by R316 and K334. H346 serves as the catalytic Proton acceptor. Residues Y349 and N360 each contribute to the UDP-N-acetyl-alpha-D-glucosamine site. Residues A363, N369–Y370, S388, S406, and R423 each bind acetyl-CoA.

In the N-terminal section; belongs to the N-acetylglucosamine-1-phosphate uridyltransferase family. The protein in the C-terminal section; belongs to the transferase hexapeptide repeat family. In terms of assembly, homotrimer. Mg(2+) is required as a cofactor.

It is found in the cytoplasm. The enzyme catalyses alpha-D-glucosamine 1-phosphate + acetyl-CoA = N-acetyl-alpha-D-glucosamine 1-phosphate + CoA + H(+). It catalyses the reaction N-acetyl-alpha-D-glucosamine 1-phosphate + UTP + H(+) = UDP-N-acetyl-alpha-D-glucosamine + diphosphate. Its pathway is nucleotide-sugar biosynthesis; UDP-N-acetyl-alpha-D-glucosamine biosynthesis; N-acetyl-alpha-D-glucosamine 1-phosphate from alpha-D-glucosamine 6-phosphate (route II): step 2/2. It functions in the pathway nucleotide-sugar biosynthesis; UDP-N-acetyl-alpha-D-glucosamine biosynthesis; UDP-N-acetyl-alpha-D-glucosamine from N-acetyl-alpha-D-glucosamine 1-phosphate: step 1/1. It participates in bacterial outer membrane biogenesis; LPS lipid A biosynthesis. Catalyzes the last two sequential reactions in the de novo biosynthetic pathway for UDP-N-acetylglucosamine (UDP-GlcNAc). The C-terminal domain catalyzes the transfer of acetyl group from acetyl coenzyme A to glucosamine-1-phosphate (GlcN-1-P) to produce N-acetylglucosamine-1-phosphate (GlcNAc-1-P), which is converted into UDP-GlcNAc by the transfer of uridine 5-monophosphate (from uridine 5-triphosphate), a reaction catalyzed by the N-terminal domain. The chain is Bifunctional protein GlmU from Paracoccus denitrificans (strain Pd 1222).